The chain runs to 260 residues: Acetylglutamate kinase (260 aa).

Residues 41–42 (GG), R63, and N157 each bind substrate.

It belongs to the acetylglutamate kinase family. ArgB subfamily.

Its subcellular location is the cytoplasm. The catalysed reaction is N-acetyl-L-glutamate + ATP = N-acetyl-L-glutamyl 5-phosphate + ADP. It participates in amino-acid biosynthesis; L-arginine biosynthesis; N(2)-acetyl-L-ornithine from L-glutamate: step 2/4. Its function is as follows. Catalyzes the ATP-dependent phosphorylation of N-acetyl-L-glutamate. The sequence is that of Acetylglutamate kinase from Acidobacterium capsulatum (strain ATCC 51196 / DSM 11244 / BCRC 80197 / JCM 7670 / NBRC 15755 / NCIMB 13165 / 161).